The chain runs to 212 residues: Ribosomal RNA large subunit methyltransferase E (212 aa).

Residues Gly-57, Trp-59, Asp-77, Asp-93, and Asp-122 each coordinate S-adenosyl-L-methionine. Catalysis depends on Lys-162, which acts as the Proton acceptor.

The protein belongs to the class I-like SAM-binding methyltransferase superfamily. RNA methyltransferase RlmE family.

It is found in the cytoplasm. It carries out the reaction uridine(2552) in 23S rRNA + S-adenosyl-L-methionine = 2'-O-methyluridine(2552) in 23S rRNA + S-adenosyl-L-homocysteine + H(+). Functionally, specifically methylates the uridine in position 2552 of 23S rRNA at the 2'-O position of the ribose in the fully assembled 50S ribosomal subunit. The protein is Ribosomal RNA large subunit methyltransferase E of Coxiella burnetii (strain CbuK_Q154) (Coxiella burnetii (strain Q154)).